A 165-amino-acid polypeptide reads, in one-letter code: Inorganic pyrophosphatase (165 aa).

Substrate is bound by residues K21, R35, and Y47. Mg(2+) is bound by residues D57, D62, and D94. Y131 lines the substrate pocket.

Belongs to the PPase family. As to quaternary structure, homotrimer. In presence of divalent cations the trimers aggregate to form a hexamer. Mg(2+) is required as a cofactor.

The protein localises to the cytoplasm. It carries out the reaction diphosphate + H2O = 2 phosphate + H(+). Catalyzes the hydrolysis of inorganic pyrophosphate (PPi) forming two phosphate ions. In Bacillus sp. (strain PS3), this protein is Inorganic pyrophosphatase.